Consider the following 735-residue polypeptide: Catalase-peroxidase (735 aa).

A compositionally biased stretch (polar residues) spans methionine 1–glycine 10. The tract at residues methionine 1 to serine 20 is disordered. A cross-link (tryptophyl-tyrosyl-methioninium (Trp-Tyr) (with M-254)) is located at residues tryptophan 100 to tyrosine 228. Histidine 101 functions as the Proton acceptor in the catalytic mechanism. The segment at residues tyrosine 228 to methionine 254 is a cross-link (tryptophyl-tyrosyl-methioninium (Tyr-Met) (with W-100)). Histidine 269 is a binding site for heme b.

This sequence belongs to the peroxidase family. Peroxidase/catalase subfamily. In terms of assembly, homodimer or homotetramer. Requires heme b as cofactor. Post-translationally, formation of the three residue Trp-Tyr-Met cross-link is important for the catalase, but not the peroxidase activity of the enzyme.

It catalyses the reaction H2O2 + AH2 = A + 2 H2O. The enzyme catalyses 2 H2O2 = O2 + 2 H2O. In terms of biological role, bifunctional enzyme with both catalase and broad-spectrum peroxidase activity. This chain is Catalase-peroxidase, found in Jannaschia sp. (strain CCS1).